A 167-amino-acid chain; its full sequence is NAD(P)H-quinone oxidoreductase subunit I, chloroplastic (167 aa).

4Fe-4S ferredoxin-type domains follow at residues 55–84 and 95–124; these read GRIHFEFDKCIACEVCVRVCPIDLPVVDWK and LNYSIDFGICIFCGNCVEYCPTNCLSMTEE. [4Fe-4S] cluster is bound by residues Cys-64, Cys-67, Cys-70, Cys-74, Cys-104, Cys-107, Cys-110, and Cys-114.

Belongs to the complex I 23 kDa subunit family. As to quaternary structure, NDH is composed of at least 16 different subunits, 5 of which are encoded in the nucleus. The cofactor is [4Fe-4S] cluster.

It localises to the plastid. The protein resides in the chloroplast thylakoid membrane. The catalysed reaction is a plastoquinone + NADH + (n+1) H(+)(in) = a plastoquinol + NAD(+) + n H(+)(out). It catalyses the reaction a plastoquinone + NADPH + (n+1) H(+)(in) = a plastoquinol + NADP(+) + n H(+)(out). Functionally, NDH shuttles electrons from NAD(P)H:plastoquinone, via FMN and iron-sulfur (Fe-S) centers, to quinones in the photosynthetic chain and possibly in a chloroplast respiratory chain. The immediate electron acceptor for the enzyme in this species is believed to be plastoquinone. Couples the redox reaction to proton translocation, and thus conserves the redox energy in a proton gradient. The polypeptide is NAD(P)H-quinone oxidoreductase subunit I, chloroplastic (Jasminum nudiflorum (Winter jasmine)).